The following is a 608-amino-acid chain: Putative multicopper oxidase GMC1 (608 aa).

Plastocyanin-like domains are found at residues 51 to 163, 243 to 374, and 421 to 548; these read INGY…LIVE, LING…ELYR, and ERTF…FEVP. Positions 100, 102, 145, and 147 each coordinate Cu cation. 7 residues coordinate Cu cation: histidine 452, histidine 455, histidine 457, histidine 530, cysteine 531, histidine 532, and histidine 536.

It belongs to the multicopper oxidase family. Cu cation is required as a cofactor.

Functionally, could be an iron transport multicopper oxidase, which is required for Fe(2+) high affinity uptake. May be required to oxidize Fe(2+) and release it from the transporter. Essential component of copper-dependent iron transport. Involved in meiotic prophase and synaptonemal complex (SC) assembly. In Saccharomyces cerevisiae (strain ATCC 204508 / S288c) (Baker's yeast), this protein is Putative multicopper oxidase GMC1 (GMC1).